Consider the following 218-residue polypeptide: Monomethylamine corrinoid protein 1 (218 aa).

The region spanning 1–91 is the B12-binding N-terminal domain; that stretch reads MANQEIFDKL…ELEKTKVEGE (91 aa). In terms of domain architecture, B12-binding spans 94-218; the sequence is TGLAITFVAE…AAKVALNIMK (125 aa). His-107 lines the methylcob(III)alamin pocket.

This sequence belongs to the methylamine corrinoid protein family. Can form a complex with MtmB.

Its pathway is one-carbon metabolism; methanogenesis from methylamine. Acts as a methyl group carrier between MtmB and MtbA. In Methanosarcina mazei (strain ATCC BAA-159 / DSM 3647 / Goe1 / Go1 / JCM 11833 / OCM 88) (Methanosarcina frisia), this protein is Monomethylamine corrinoid protein 1 (mtmC1).